The primary structure comprises 186 residues: Ribosome-recycling factor (186 aa).

This sequence belongs to the RRF family.

It localises to the cytoplasm. Functionally, responsible for the release of ribosomes from messenger RNA at the termination of protein biosynthesis. May increase the efficiency of translation by recycling ribosomes from one round of translation to another. The chain is Ribosome-recycling factor from Maricaulis maris (strain MCS10) (Caulobacter maris).